Reading from the N-terminus, the 196-residue chain is Imidazole glycerol phosphate synthase subunit HisH (196 aa).

The Glutamine amidotransferase type-1 domain occupies 2-196 (NVVILDTGCA…AQLLKNFLEM (195 aa)). The active-site Nucleophile is the Cys77. Active-site residues include His178 and Glu180.

Heterodimer of HisH and HisF.

The protein resides in the cytoplasm. The enzyme catalyses 5-[(5-phospho-1-deoxy-D-ribulos-1-ylimino)methylamino]-1-(5-phospho-beta-D-ribosyl)imidazole-4-carboxamide + L-glutamine = D-erythro-1-(imidazol-4-yl)glycerol 3-phosphate + 5-amino-1-(5-phospho-beta-D-ribosyl)imidazole-4-carboxamide + L-glutamate + H(+). The catalysed reaction is L-glutamine + H2O = L-glutamate + NH4(+). It functions in the pathway amino-acid biosynthesis; L-histidine biosynthesis; L-histidine from 5-phospho-alpha-D-ribose 1-diphosphate: step 5/9. Its function is as follows. IGPS catalyzes the conversion of PRFAR and glutamine to IGP, AICAR and glutamate. The HisH subunit catalyzes the hydrolysis of glutamine to glutamate and ammonia as part of the synthesis of IGP and AICAR. The resulting ammonia molecule is channeled to the active site of HisF. This Salmonella choleraesuis (strain SC-B67) protein is Imidazole glycerol phosphate synthase subunit HisH.